Here is a 353-residue protein sequence, read N- to C-terminus: GTPase Obg (353 aa).

Residues 1-159 (MKFLDEAKVY…RWIWLRLKLI (159 aa)) enclose the Obg domain. In terms of domain architecture, OBG-type G spans 160 to 327 (ADAGLVGLPN…VLRALVAVIG (168 aa)). Residues 166–173 (GLPNAGKS), 191–195 (FTTLH), 212–215 (DIPG), 279–282 (NKID), and 308–310 (SGV) each bind GTP. The Mg(2+) site is built by Ser-173 and Thr-193.

This sequence belongs to the TRAFAC class OBG-HflX-like GTPase superfamily. OBG GTPase family. As to quaternary structure, monomer. Mg(2+) serves as cofactor.

It localises to the cytoplasm. Its function is as follows. An essential GTPase which binds GTP, GDP and possibly (p)ppGpp with moderate affinity, with high nucleotide exchange rates and a fairly low GTP hydrolysis rate. Plays a role in control of the cell cycle, stress response, ribosome biogenesis and in those bacteria that undergo differentiation, in morphogenesis control. This Rhodopseudomonas palustris (strain TIE-1) protein is GTPase Obg.